Here is a 177-residue protein sequence, read N- to C-terminus: MAELSTIARPYAKAAFDFAIEKNAVESWAEMLSFAAQVSENETMKPLLSGALSSSQLADLFIKVCGEQINEQGQNLIKVMAENGRLEVLPAVYELFHEFSNEWAKEVEASVVSATELSAEQQQQISASLEKRLTRKVKLNCSVDASLVAGVIITAGDLVIDGSVSGKLNRLSEKLQS.

The protein belongs to the ATPase delta chain family. As to quaternary structure, F-type ATPases have 2 components, F(1) - the catalytic core - and F(0) - the membrane proton channel. F(1) has five subunits: alpha(3), beta(3), gamma(1), delta(1), epsilon(1). F(0) has three main subunits: a(1), b(2) and c(10-14). The alpha and beta chains form an alternating ring which encloses part of the gamma chain. F(1) is attached to F(0) by a central stalk formed by the gamma and epsilon chains, while a peripheral stalk is formed by the delta and b chains.

The protein localises to the cell inner membrane. F(1)F(0) ATP synthase produces ATP from ADP in the presence of a proton or sodium gradient. F-type ATPases consist of two structural domains, F(1) containing the extramembraneous catalytic core and F(0) containing the membrane proton channel, linked together by a central stalk and a peripheral stalk. During catalysis, ATP synthesis in the catalytic domain of F(1) is coupled via a rotary mechanism of the central stalk subunits to proton translocation. Its function is as follows. This protein is part of the stalk that links CF(0) to CF(1). It either transmits conformational changes from CF(0) to CF(1) or is implicated in proton conduction. The chain is ATP synthase subunit delta from Shewanella loihica (strain ATCC BAA-1088 / PV-4).